The primary structure comprises 466 residues: D-inositol 3-phosphate glycosyltransferase (466 aa).

Positions 1–12 (MRPMRAGAGAAG) are enriched in low complexity. Residues 1 to 22 (MRPMRAGAGAAGESCKDDGVRP) are disordered. A 1D-myo-inositol 3-phosphate-binding site is contributed by His-43. UDP-N-acetyl-alpha-D-glucosamine contacts are provided by residues 49–50 (QP) and Gly-57. 1D-myo-inositol 3-phosphate-binding positions include 54-59 (DAGGMN), Lys-112, Tyr-145, Thr-169, and Arg-189. UDP-N-acetyl-alpha-D-glucosamine-binding residues include Arg-263, Lys-268, and Gln-321. Phe-330, His-331, and Val-333 together coordinate Mg(2+). Positions 343 and 351 each coordinate UDP-N-acetyl-alpha-D-glucosamine. Thr-357 contacts Mg(2+). The segment at 446 to 466 (VRDPVAARKPRRWTARRGVGA) is disordered.

This sequence belongs to the glycosyltransferase group 1 family. MshA subfamily. In terms of assembly, homodimer.

The enzyme catalyses 1D-myo-inositol 3-phosphate + UDP-N-acetyl-alpha-D-glucosamine = 1D-myo-inositol 2-acetamido-2-deoxy-alpha-D-glucopyranoside 3-phosphate + UDP + H(+). In terms of biological role, catalyzes the transfer of a N-acetyl-glucosamine moiety to 1D-myo-inositol 3-phosphate to produce 1D-myo-inositol 2-acetamido-2-deoxy-glucopyranoside 3-phosphate in the mycothiol biosynthesis pathway. The sequence is that of D-inositol 3-phosphate glycosyltransferase from Mycobacterium marinum (strain ATCC BAA-535 / M).